A 526-amino-acid chain; its full sequence is MTSPVPSEPVSEDTHDSSSGSEVEPSKTSTRAPKRRRLSESSDDSDDSYVAPAPLPTLSRIKKKGAPDAKPAAPAGQDNPVLIRDALEIGLREEASSFAALNVAPWLVGSLTTMAVRKPTAIQKACIPEILKGRDCIGGSRTGSGKTIAFSVPMLQKWAEDPFGIFGVVLTPTRELALQIFEQIKAISAPQSMKPVLITGGTDMRPQAIALAGRPHVVIATPGRLADHIKSSGEDTVCGLKRVRMVVLDEADRLLASGPGSMLPDVETCLSALPPSSERQTLLFTATVTPEVRALKNMPRSANKPPVFVTEISTENQGTIPPTLKQTYLKVPLTHREAFLHVLLSTEGNASKPAIVFCNHTKTADLLERMLRRLSHRVTSLHSLLPQSERNANLARFRASAARILVATDVASRGLDIPTVSLVINYDVPRNPDDYVHRVGRTARAGRRGEAVTLVGQRDVQLVLAIEERVGRQMEEWSEEGVSIEGRLVRTGALKEVGEAKREAMVEIDEGRDVLGRKRNKLKKVR.

Residues 1–77 (MTSPVPSEPV…DAKPAAPAGQ (77 aa)) are disordered. A compositionally biased stretch (polar residues) spans 17-31 (SSSGSEVEPSKTSTR). Positions 96 to 124 (SSFAALNVAPWLVGSLTTMAVRKPTAIQK) match the Q motif motif. In terms of domain architecture, Helicase ATP-binding spans 127-306 (IPEILKGRDC…NMPRSANKPP (180 aa)). ATP is bound at residue 140–147 (SRTGSGKT). The short motif at 249-252 (DEAD) is the DEAD box element. A Helicase C-terminal domain is found at 338 to 485 (AFLHVLLSTE…EWSEEGVSIE (148 aa)).

It belongs to the DEAD box helicase family. DDX49/DBP8 subfamily.

The protein resides in the nucleus. It is found in the nucleolus. It catalyses the reaction ATP + H2O = ADP + phosphate + H(+). Its function is as follows. ATP-binding RNA helicase involved in 40S ribosomal subunit biogenesis and is required for the normal formation of 18S rRNAs through pre-rRNA processing at A0, A1 and A2 sites. Required for vegetative growth. The protein is ATP-dependent RNA helicase dbp8 (dbp8) of Aspergillus fumigatus (strain ATCC MYA-4609 / CBS 101355 / FGSC A1100 / Af293) (Neosartorya fumigata).